Reading from the N-terminus, the 247-residue chain is 23S rRNA (guanosine-2'-O-)-methyltransferase RlmB (247 aa).

Positions 197, 217, and 226 each coordinate S-adenosyl-L-methionine.

Belongs to the class IV-like SAM-binding methyltransferase superfamily. RNA methyltransferase TrmH family. RlmB subfamily.

It localises to the cytoplasm. It catalyses the reaction guanosine(2251) in 23S rRNA + S-adenosyl-L-methionine = 2'-O-methylguanosine(2251) in 23S rRNA + S-adenosyl-L-homocysteine + H(+). In terms of biological role, specifically methylates the ribose of guanosine 2251 in 23S rRNA. The chain is 23S rRNA (guanosine-2'-O-)-methyltransferase RlmB from Burkholderia sp.